Consider the following 102-residue polypeptide: Citrate lyase acyl carrier protein (102 aa).

The residue at position 14 (serine 14) is an O-(phosphoribosyl dephospho-coenzyme A)serine.

It belongs to the CitD family. As to quaternary structure, oligomer with a subunit composition of (alpha,beta,gamma)6.

It is found in the cytoplasm. In terms of biological role, covalent carrier of the coenzyme of citrate lyase. The polypeptide is Citrate lyase acyl carrier protein (Streptococcus pyogenes serotype M4 (strain MGAS10750)).